Reading from the N-terminus, the 180-residue chain is Large ribosomal subunit protein uL5 (180 aa).

It belongs to the universal ribosomal protein uL5 family. As to quaternary structure, part of the 50S ribosomal subunit; part of the 5S rRNA/L5/L18/L25 subcomplex. Contacts the 5S rRNA and the P site tRNA. Forms a bridge to the 30S subunit in the 70S ribosome.

This is one of the proteins that bind and probably mediate the attachment of the 5S RNA into the large ribosomal subunit, where it forms part of the central protuberance. In the 70S ribosome it contacts protein S13 of the 30S subunit (bridge B1b), connecting the 2 subunits; this bridge is implicated in subunit movement. Contacts the P site tRNA; the 5S rRNA and some of its associated proteins might help stabilize positioning of ribosome-bound tRNAs. This is Large ribosomal subunit protein uL5 from Mycoplasma capricolum subsp. capricolum (strain California kid / ATCC 27343 / NCTC 10154).